Here is a 331-residue protein sequence, read N- to C-terminus: Lactamase-like protein nscB (331 aa).

Zn(2+)-binding residues include His-106, His-108, Asp-110, and His-111. Asp-110 acts as the Proton donor/acceptor in catalysis.

The protein belongs to the metallo-beta-lactamase superfamily. Zn(2+) is required as a cofactor.

Its pathway is secondary metabolite biosynthesis. Its function is as follows. Lactamase-like protein; part of the gene cluster that mediates the biosynthesis of neosartoricin B, a prenylated anthracenone that probably exhibits T-cell antiproliferative activity, suggestive of a physiological role as an immunosuppressive agent. The non-reducing polyketide synthase nscA probably synthesizes and cyclizes the decaketide backbone. The hydrolase nscB then mediates the product release through hydrolysis followed by spontaneous decarboxylation. The prenyltransferase nscD catalyzes the addition of the dimethylallyl group to the aromatic C5. The FAD-dependent monooxygenase nscC is then responsible for the stereospecific hydroxylation at C2. Neosartoricin B can be converted into two additional compounds neosartoricins C and D. Neosartoricin C is a spirocyclic compound that is cyclized through the attack of C3 hydroxyl on C14, followed by dehydration. On the other hand, neosartoricin D is a further cyclized compound in which attack of C2 on C14 in neosartoricin C results in the formation of the acetal-containing dioxabicyclo-octanone ring. Both of these compounds are novel and possibly represent related metabolites of the gene cluster. This Trichophyton equinum (strain ATCC MYA-4606 / CBS 127.97) (Horse ringworm fungus) protein is Lactamase-like protein nscB.